A 420-amino-acid polypeptide reads, in one-letter code: 4-hydroxy-3-methylbut-2-en-1-yl diphosphate synthase (flavodoxin) (420 aa).

4 residues coordinate [4Fe-4S] cluster: Cys307, Cys310, Cys353, and Glu360.

Belongs to the IspG family. It depends on [4Fe-4S] cluster as a cofactor.

The catalysed reaction is (2E)-4-hydroxy-3-methylbut-2-enyl diphosphate + oxidized [flavodoxin] + H2O + 2 H(+) = 2-C-methyl-D-erythritol 2,4-cyclic diphosphate + reduced [flavodoxin]. It participates in isoprenoid biosynthesis; isopentenyl diphosphate biosynthesis via DXP pathway; isopentenyl diphosphate from 1-deoxy-D-xylulose 5-phosphate: step 5/6. Converts 2C-methyl-D-erythritol 2,4-cyclodiphosphate (ME-2,4cPP) into 1-hydroxy-2-methyl-2-(E)-butenyl 4-diphosphate. The polypeptide is 4-hydroxy-3-methylbut-2-en-1-yl diphosphate synthase (flavodoxin) (Brucella suis biovar 1 (strain 1330)).